We begin with the raw amino-acid sequence, 242 residues long: Protein HTATIP2 (242 aa).

Ala2 carries the post-translational modification N-acetylalanine. The interval 2–25 (ADKETLLKLREDFKMQNKSVFILG) is required for interaction with elongation factor EEF1A1. Ser27, Gly28, Glu29, Thr30, Arg52, Arg53, Leu92, Gly93, Tyr143, Lys147, Leu170, and Arg178 together coordinate NADPH. Catalysis depends on Tyr143, which acts as the Proton acceptor. Lys147 is a catalytic residue.

Monomer. Forms homodimers during oxidative stress. Interacts (via N-terminus) with elongation factor EEF1A1 (via middle-region); the interaction is direct and competes with EEF1A1 binding to guanyl-nucleotide exchange factor EEF1B2, thereby inhibiting GDP for GTP exchange and reactivation of EEF1A1. Interacts with nuclear transport receptors XPO4, IPO5/RANBP5, IPO7, IPO9 and KPNB1 as well as GCN1L1/GCN1 and LRPPRC probably through their HEAT repeats. Binds NCOA5/CIA.

Functionally, represses translation by preventing reactivation of elongation factor eEF1A. May also inhibit nuclear import by competing with nuclear import substrates for binding to a subset of nuclear transport receptors. Has additionally been proposed to act as a redox sensor involved in cellular oxidative stress surveillance. May bind NADPH. This is Protein HTATIP2 from Rattus norvegicus (Rat).